The chain runs to 512 residues: 2,3-bisphosphoglycerate-independent phosphoglycerate mutase (512 aa).

D13 and S63 together coordinate Mn(2+). S63 (phosphoserine intermediate) is an active-site residue. Substrate-binding positions include H124, 154–155 (RD), R186, R192, 262–265 (RPDR), and K337. Positions 404, 408, 445, 446, and 463 each coordinate Mn(2+).

The protein belongs to the BPG-independent phosphoglycerate mutase family. Monomer. It depends on Mn(2+) as a cofactor.

It catalyses the reaction (2R)-2-phosphoglycerate = (2R)-3-phosphoglycerate. It participates in carbohydrate degradation; glycolysis; pyruvate from D-glyceraldehyde 3-phosphate: step 3/5. In terms of biological role, essential for rapid growth and for sporulation. Catalyzes the interconversion of 2-phosphoglycerate and 3-phosphoglycerate. The protein is 2,3-bisphosphoglycerate-independent phosphoglycerate mutase of Oceanobacillus iheyensis (strain DSM 14371 / CIP 107618 / JCM 11309 / KCTC 3954 / HTE831).